The sequence spans 214 residues: Glycerol-3-phosphate acyltransferase (214 aa).

5 consecutive transmembrane segments (helical) span residues 8 to 28 (LILA…QIFF), 70 to 90 (LLPL…LIAV), 111 to 131 (AGVV…IFIV), 144 to 164 (IVVA…GIIL), and 165 to 185 (PSYD…ILIR).

Belongs to the PlsY family. Probably interacts with PlsX.

It localises to the cell membrane. The catalysed reaction is an acyl phosphate + sn-glycerol 3-phosphate = a 1-acyl-sn-glycero-3-phosphate + phosphate. It participates in lipid metabolism; phospholipid metabolism. Its function is as follows. Catalyzes the transfer of an acyl group from acyl-phosphate (acyl-PO(4)) to glycerol-3-phosphate (G3P) to form lysophosphatidic acid (LPA). This enzyme utilizes acyl-phosphate as fatty acyl donor, but not acyl-CoA or acyl-ACP. This Streptococcus gordonii (strain Challis / ATCC 35105 / BCRC 15272 / CH1 / DL1 / V288) protein is Glycerol-3-phosphate acyltransferase.